Here is a 266-residue protein sequence, read N- to C-terminus: 3-methyl-2-oxobutanoate hydroxymethyltransferase (266 aa).

Residues aspartate 43 and aspartate 82 each contribute to the Mg(2+) site. Residues 43–44 (DS), aspartate 82, and lysine 110 contribute to the 3-methyl-2-oxobutanoate site. Residue glutamate 112 participates in Mg(2+) binding. The Proton acceptor role is filled by glutamate 179.

It belongs to the PanB family. Homodecamer; pentamer of dimers. Mg(2+) is required as a cofactor.

It localises to the cytoplasm. It carries out the reaction 3-methyl-2-oxobutanoate + (6R)-5,10-methylene-5,6,7,8-tetrahydrofolate + H2O = 2-dehydropantoate + (6S)-5,6,7,8-tetrahydrofolate. It participates in cofactor biosynthesis; (R)-pantothenate biosynthesis; (R)-pantoate from 3-methyl-2-oxobutanoate: step 1/2. Catalyzes the reversible reaction in which hydroxymethyl group from 5,10-methylenetetrahydrofolate is transferred onto alpha-ketoisovalerate to form ketopantoate. This is 3-methyl-2-oxobutanoate hydroxymethyltransferase from Psychrobacter arcticus (strain DSM 17307 / VKM B-2377 / 273-4).